The sequence spans 96 residues: Probable Fe(2+)-trafficking protein (96 aa).

Residues 21 to 40 (LPKMPHPPFPNKKGQELQET) form a disordered region.

Belongs to the Fe(2+)-trafficking protein family.

In terms of biological role, could be a mediator in iron transactions between iron acquisition and iron-requiring processes, such as synthesis and/or repair of Fe-S clusters in biosynthetic enzymes. This chain is Probable Fe(2+)-trafficking protein, found in Psychrobacter arcticus (strain DSM 17307 / VKM B-2377 / 273-4).